Consider the following 212-residue polypeptide: Peptide methionine sulfoxide reductase MsrA (212 aa).

Residue Cys52 is part of the active site.

The protein belongs to the MsrA Met sulfoxide reductase family.

The enzyme catalyses L-methionyl-[protein] + [thioredoxin]-disulfide + H2O = L-methionyl-(S)-S-oxide-[protein] + [thioredoxin]-dithiol. It catalyses the reaction [thioredoxin]-disulfide + L-methionine + H2O = L-methionine (S)-S-oxide + [thioredoxin]-dithiol. Functionally, has an important function as a repair enzyme for proteins that have been inactivated by oxidation. Catalyzes the reversible oxidation-reduction of methionine sulfoxide in proteins to methionine. This is Peptide methionine sulfoxide reductase MsrA from Shigella boydii serotype 4 (strain Sb227).